Consider the following 146-residue polypeptide: Ribonuclease H (146 aa).

The region spanning 1–143 is the RNase H type-1 domain; the sequence is MEKTITIYTD…CDELARLAIK (143 aa). Residues Asp10, Glu48, Asp70, and Asp135 each coordinate Mg(2+).

This sequence belongs to the RNase H family. In terms of assembly, monomer. Requires Mg(2+) as cofactor.

The protein localises to the cytoplasm. The enzyme catalyses Endonucleolytic cleavage to 5'-phosphomonoester.. Functionally, endonuclease that specifically degrades the RNA of RNA-DNA hybrids. This chain is Ribonuclease H, found in Chlorobaculum parvum (strain DSM 263 / NCIMB 8327) (Chlorobium vibrioforme subsp. thiosulfatophilum).